The following is a 595-amino-acid chain: MKNIRNFCIIAHIDHGKSTLADRLLEYTKTVEGKDMQAQVLDDMDLERERGITIKSHAIQMKYNYKGEEYILNLIDTPGHVDFSYEVSRSIAACEGALLIVDAAQGIQAQTISNLYMAIENDLEIIPVMNKIDLPSAMPEEVEDQIVELLGCPREDILRASGKTGEGVTEILNTIVEKVPAPKGDPEAPLQCLIFDSVFNPFRGIIAYFKVVNGVIRKGDHVKFIATGKEYDADEVGILKLDMCPREEIRTGDVGYIISGIKTSREVRVGDTITHVSRPAKDAIAGFEEVKPMVFAGVYPIDSEDFENLRASLEKLQLNDASLTFQPESSAALGFGFRCGFLGLLHMEIVQERLDREFNMDVITTVPNVSYIVHTKKGEEIEVHNPGGLPDPTLIDHIDEPFIRASVITNTTYIGPIMTLCLGKRGVLLKQEYISGDRVEIHYDLPLGEIVIDFYDKLKSISKGYASFDYHLHDFRPSKLAKLDILLNGEPVDALSTLTHVDNSVTFGRRMCEKLKELIPRQQFDIAIQAAIGAKIIARETIKAVRKDVTAKCYGGDISRKRKLLEKQKEGKKRMKQIGTVEVPQKAFLAVLKLD.

Residues 2 to 183 (KNIRNFCIIA…TIVEKVPAPK (182 aa)) enclose the tr-type G domain. Residues 14–19 (DHGKST) and 130–133 (NKID) each bind GTP.

Belongs to the TRAFAC class translation factor GTPase superfamily. Classic translation factor GTPase family. LepA subfamily.

It localises to the cell inner membrane. The enzyme catalyses GTP + H2O = GDP + phosphate + H(+). Functionally, required for accurate and efficient protein synthesis under certain stress conditions. May act as a fidelity factor of the translation reaction, by catalyzing a one-codon backward translocation of tRNAs on improperly translocated ribosomes. Back-translocation proceeds from a post-translocation (POST) complex to a pre-translocation (PRE) complex, thus giving elongation factor G a second chance to translocate the tRNAs correctly. Binds to ribosomes in a GTP-dependent manner. This is Elongation factor 4 from Parabacteroides distasonis (strain ATCC 8503 / DSM 20701 / CIP 104284 / JCM 5825 / NCTC 11152).